The primary structure comprises 432 residues: uncharacterized protein (432 aa).

12 consecutive transmembrane segments (helical) span residues 35-55 (VARVGAATALAVACVYTVIYL), 60-80 (LPPACFSIFAVFWGALGIATG), 112-132 (VAGMIGTVAAVVIAGSSPLWS), 144-164 (VGLLSVGVAGFCAQATLLGAL), 185-205 (LAVAAAAVVIGWGLAGYLWAA), 209-229 (AVAWLLMLMASPTARSAASLL), 242-262 (AHSITAAGASAILVMGFPVLL), 274-294 (GAVILAVTLTRAPLLVPLSAM), 313-333 (LIAPALVVGGIGAVGMLAAGL), 359-379 (AAAVAIAMLTLTGAAAVAAAL), 384-404 (LLGWVSATVASTLLLLLPMPL), and 408-428 (TVIALLFGPTVGIAIHVAALA).

The protein to M.tuberculosis Rv3630 and M.bovis Mb3654.

Its subcellular location is the cell membrane. This is an uncharacterized protein from Mycobacterium tuberculosis (strain CDC 1551 / Oshkosh).